Reading from the N-terminus, the 106-residue chain is 3-phenylpropionate/cinnamic acid dioxygenase ferredoxin subunit (106 aa).

The 96-residue stretch at 4 to 99 (IYACPVADVP…VHVEGGDIFI (96 aa)) folds into the Rieske domain. Cys42, His44, Cys62, and His65 together coordinate [2Fe-2S] cluster.

The protein belongs to the bacterial ring-hydroxylating dioxygenase ferredoxin component family. This dioxygenase system consists of four proteins: the two subunits of the hydroxylase component (HcaE and HcaF), a ferredoxin (HcaC) and a ferredoxin reductase (HcaD). It depends on [2Fe-2S] cluster as a cofactor.

It functions in the pathway aromatic compound metabolism; 3-phenylpropanoate degradation. Its function is as follows. Part of the multicomponent 3-phenylpropionate dioxygenase, that converts 3-phenylpropionic acid (PP) and cinnamic acid (CI) into 3-phenylpropionate-dihydrodiol (PP-dihydrodiol) and cinnamic acid-dihydrodiol (CI-dihydrodiol), respectively. This protein seems to be a 2Fe-2S ferredoxin. This chain is 3-phenylpropionate/cinnamic acid dioxygenase ferredoxin subunit, found in Shigella flexneri serotype 5b (strain 8401).